We begin with the raw amino-acid sequence, 88 residues long: Protein transport protein SBH2 (88 aa).

The interval 1 to 42 (MAASVPPGGQRILQKRRQAQSIKEKQAKQTPTSTRQAGYGGS) is disordered. Residues 1–61 (MAASVPPGGQ…DEANGFRVDS (61 aa)) are Cytoplasmic-facing. Polar residues predominate over residues 28 to 42 (KQTPTSTRQAGYGGS). The helical transmembrane segment at 62 to 82 (LVVLFLSVGFIFSVIALHLLT) threads the bilayer.

This sequence belongs to the SEC61-beta family. In terms of assembly, component of the heterotrimeric Ssh1 complex, which is composed of SSH1, SBH2 and SSS1.

The protein resides in the endoplasmic reticulum membrane. Part of the Ssh1 complex, which probably is the major component of a channel-forming translocon complex that may function exclusively in the cotranslational pathway of protein endoplasmic reticulum (ER) import. This Saccharomyces cerevisiae (strain ATCC 204508 / S288c) (Baker's yeast) protein is Protein transport protein SBH2 (SBH2).